A 377-amino-acid chain; its full sequence is MFDPHILDSPAVIFDNGSGLCKAGLSGEIGPRHVVSSVVGHPKFKTPLTGANQKKYFVGEEALHRHEVLQLHYPIERGLITGWEDMEKLWKHLFEWELGVKANDQPVLMTEPSLNPRETREKMAEVMFESFNVPAFYLSDQAVLALYASACVTGLVVDSGDGVTCTVPIFEGYSLPHAVTKLYVAGRDITEHLTRLLLASGRTFSCVLDKALVDDIKEKLCYVALEPDKELCRRPEEVLREYKLPDGNIVPIGDQLYQAPEALFSPEKLGIQNPGLSKMVSCSITKCDADIQKTLYGEIVLSGGTTLFQGLDDRLLRELEQLASKGTPIKITAPPDRWFSTWIGASIVTSLSSFKQMWVTSADFKEFGTSVIQRRCF.

Belongs to the actin family.

It is found in the cytoplasm. The protein localises to the cytoskeleton. This Bos taurus (Bovine) protein is Actin-related protein T2 (ACTRT2).